A 460-amino-acid chain; its full sequence is N-lysine methyltransferase setd6 (460 aa).

Residues 28-265 form the SET domain; that stretch reads ESVQLTLSDK…KGEEVFNTYG (238 aa).

Belongs to the class V-like SAM-binding methyltransferase superfamily. Histone-lysine methyltransferase family. SETD6 subfamily.

It localises to the nucleus. Protein-lysine N-methyltransferase. The sequence is that of N-lysine methyltransferase setd6 (setd6) from Danio rerio (Zebrafish).